Reading from the N-terminus, the 140-residue chain is Transcription antitermination protein NusB (140 aa).

Belongs to the NusB family.

In terms of biological role, involved in transcription antitermination. Required for transcription of ribosomal RNA (rRNA) genes. Binds specifically to the boxA antiterminator sequence of the ribosomal RNA (rrn) operons. This chain is Transcription antitermination protein NusB, found in Streptococcus pneumoniae serotype 2 (strain D39 / NCTC 7466).